A 165-amino-acid polypeptide reads, in one-letter code: Cyclic pyranopterin monophosphate synthase (165 aa).

Substrate is bound by residues 76–78 (MCH) and 113–114 (IE). Asp-128 is an active-site residue.

The protein belongs to the MoaC family. As to quaternary structure, homohexamer; trimer of dimers.

It carries out the reaction (8S)-3',8-cyclo-7,8-dihydroguanosine 5'-triphosphate = cyclic pyranopterin phosphate + diphosphate. It participates in cofactor biosynthesis; molybdopterin biosynthesis. In terms of biological role, catalyzes the conversion of (8S)-3',8-cyclo-7,8-dihydroguanosine 5'-triphosphate to cyclic pyranopterin monophosphate (cPMP). This is Cyclic pyranopterin monophosphate synthase from Limosilactobacillus fermentum (strain NBRC 3956 / LMG 18251) (Lactobacillus fermentum).